The primary structure comprises 224 residues: Ribose-5-phosphate isomerase A (224 aa).

Substrate-binding positions include 26–29 (TGST), 81–84 (DGAD), and 94–97 (KGGG). Catalysis depends on E103, which acts as the Proton acceptor. Position 121 (K121) interacts with substrate.

It belongs to the ribose 5-phosphate isomerase family. In terms of assembly, homodimer.

It catalyses the reaction aldehydo-D-ribose 5-phosphate = D-ribulose 5-phosphate. It functions in the pathway carbohydrate degradation; pentose phosphate pathway; D-ribose 5-phosphate from D-ribulose 5-phosphate (non-oxidative stage): step 1/1. In terms of biological role, catalyzes the reversible conversion of ribose-5-phosphate to ribulose 5-phosphate. The chain is Ribose-5-phosphate isomerase A from Listeria monocytogenes serotype 4b (strain CLIP80459).